A 79-amino-acid polypeptide reads, in one-letter code: U-actitoxin-Avd8a (79 aa).

A signal peptide spans 1-19 (MKSLVIVFVVLLGVAMISA). Positions 20-36 (NEEELLAILQDQRNDAR) are excised as a propeptide.

It belongs to the sea anemone 8 toxin family.

Its subcellular location is the secreted. It localises to the nematocyst. This chain is U-actitoxin-Avd8a, found in Anemonia viridis (Snakelocks anemone).